The following is a 463-amino-acid chain: Glycine--tRNA ligase (463 aa).

Substrate is bound by residues Arg-98 and Glu-174. ATP contacts are provided by residues Arg-206–Glu-208, Phe-216–Phe-221, Glu-290–Leu-291, and Gly-334–Arg-337. Phe-221–Glu-225 serves as a coordination point for substrate. Glu-330 to Gly-334 is a binding site for substrate.

This sequence belongs to the class-II aminoacyl-tRNA synthetase family. Homodimer.

It localises to the cytoplasm. It carries out the reaction tRNA(Gly) + glycine + ATP = glycyl-tRNA(Gly) + AMP + diphosphate. Catalyzes the attachment of glycine to tRNA(Gly). In Staphylococcus haemolyticus (strain JCSC1435), this protein is Glycine--tRNA ligase.